A 469-amino-acid polypeptide reads, in one-letter code: UDP-N-acetylmuramate--L-alanine ligase (469 aa).

Position 113–119 (glycine 113–threonine 119) interacts with ATP.

This sequence belongs to the MurCDEF family.

The protein resides in the cytoplasm. The enzyme catalyses UDP-N-acetyl-alpha-D-muramate + L-alanine + ATP = UDP-N-acetyl-alpha-D-muramoyl-L-alanine + ADP + phosphate + H(+). The protein operates within cell wall biogenesis; peptidoglycan biosynthesis. In terms of biological role, cell wall formation. The polypeptide is UDP-N-acetylmuramate--L-alanine ligase (Neisseria meningitidis serogroup C / serotype 2a (strain ATCC 700532 / DSM 15464 / FAM18)).